We begin with the raw amino-acid sequence, 257 residues long: Hydroxyacylglutathione hydrolase (257 aa).

Zn(2+) is bound by residues histidine 58, histidine 60, aspartate 62, histidine 63, histidine 116, aspartate 135, and histidine 173.

It belongs to the metallo-beta-lactamase superfamily. Glyoxalase II family. As to quaternary structure, monomer. It depends on Zn(2+) as a cofactor.

The catalysed reaction is an S-(2-hydroxyacyl)glutathione + H2O = a 2-hydroxy carboxylate + glutathione + H(+). Its pathway is secondary metabolite metabolism; methylglyoxal degradation; (R)-lactate from methylglyoxal: step 2/2. In terms of biological role, thiolesterase that catalyzes the hydrolysis of S-D-lactoyl-glutathione to form glutathione and D-lactic acid. This is Hydroxyacylglutathione hydrolase from Brucella melitensis biotype 1 (strain ATCC 23456 / CCUG 17765 / NCTC 10094 / 16M).